The sequence spans 150 residues: Large ribosomal subunit protein bL9 (150 aa).

This sequence belongs to the bacterial ribosomal protein bL9 family.

Binds to the 23S rRNA. This Acidovorax ebreus (strain TPSY) (Diaphorobacter sp. (strain TPSY)) protein is Large ribosomal subunit protein bL9.